The following is a 95-amino-acid chain: Small ubiquitin-related modifier 2 (95 aa).

A Glycyl lysine isopeptide (Lys-Gly) (interchain with G-Cter in SUMO) cross-link involves residue lysine 11. In terms of domain architecture, Ubiquitin-like spans 16–95 (DHINLKVAGQ…VFQQQTGGSF (80 aa)). Glycine 93 participates in a covalent cross-link: Glycyl lysine isopeptide (Gly-Lys) (interchain with K-? in acceptor proteins). Residues 94 to 95 (SF) constitute a propeptide that is removed on maturation.

This sequence belongs to the ubiquitin family. SUMO subfamily. Interacts with sae2 and ube2i. Covalently attached to a number of proteins, including top2. Post-translationally, polymeric chains can be formed through Lys-11 cross-linking. Cleavage of precursor form by a sentrin-specific protease is necessary for function.

It localises to the nucleus. In terms of biological role, ubiquitin-like protein that can be covalently attached to proteins as a monomer or as a lysine-linked polymer. Covalent attachment via an isopeptide bond to its substrates requires prior activation by the E1 complex sae1-sae2 and linkage to the E2 enzyme ube2i, and can be promoted by an E3 ligase such as pias1-4. This post-translational modification on lysine residues of proteins plays a crucial role in a number of cellular processes such as nuclear transport, DNA replication and repair, mitosis and signal transduction. Polymeric sumo2 chains are also susceptible to polyubiquitination which functions as a signal for proteasomal degradation of modified proteins. This chain is Small ubiquitin-related modifier 2 (sumo2), found in Xenopus tropicalis (Western clawed frog).